The primary structure comprises 87 residues: Neutrophil antibiotic peptide NP-3A (87 aa).

A signal peptide spans 1 to 19; it reads MRTLTLLTTLLLLALHTQA. Residues 20–58 constitute a propeptide that is removed on maturation; the sequence is ESPQGSTKEAPDEEQDISVFFGGDKGTALQDAAVKAGVT. 3 disulfides stabilise this stretch: cysteine 59-cysteine 87, cysteine 61-cysteine 76, and cysteine 66-cysteine 86.

This sequence belongs to the alpha-defensin family. Highest expression in bone marrow and to a much lesser extent in small intestine.

The protein resides in the secreted. Active in vitro against S.aureus, fungi, Gram-positive and Gram-negative bacteria and to a lesser extent against an enveloped virus. This is Neutrophil antibiotic peptide NP-3A from Rattus norvegicus (Rat).